The following is a 628-amino-acid chain: Leucine-rich repeat and fibronectin type-III domain-containing protein 3 (628 aa).

The first 16 residues, 1 to 16 (MAILPLLLCLLPLAPA), serve as a signal peptide directing secretion. Topologically, residues 17-539 (SSPPQSATPS…PHAPFLGGTM (523 aa)) are extracellular. The region spanning 19-59 (PPQSATPSPCPRRCRCQTQSLPLSVLCPGAGLLFVPPSLDR) is the LRRNT domain. LRR repeat units lie at residues 60 to 83 (RAAE…ANMT), 84 to 105 (GLLH…AFAD), 108 to 129 (ALRA…QLRG), 132 to 153 (NLRH…ALDD), 157 to 178 (TLED…ALGR), 181 to 202 (NVNT…AFSR), and 205 to 226 (KLAR…PLFS). Residue N81 is glycosylated (N-linked (GlcNAc...) asparagine). An LRRCT domain is found at 249 to 295 (NPLHCNCELVWLRRLAREDDLEACASPPALGGRYFWAVGEEEFVCEP). An Ig-like domain is found at 295-382 (PPVVTHRSPP…GEATAAVELT (88 aa)). C317 and C366 form a disulfide bridge. 3 N-linked (GlcNAc...) asparagine glycosylation sites follow: N339, N348, and N393. Positions 382-430 (TVGPPPPPQLANSTSCDPPRDGDPDALTPPSAASASAKVADTGPPTDRG) are disordered. Residues 406-422 (DALTPPSAASASAKVAD) show a composition bias toward low complexity. The region spanning 425-523 (PPTDRGVQVT…GCARFSTEPA (99 aa)) is the Fibronectin type-III domain. The N-linked (GlcNAc...) asparagine glycan is linked to N462. Residues 540 to 560 (IIALGGVIVASVLVFIFVLLM) traverse the membrane as a helical segment. Residues 561–628 (RYKVHGGQPP…WGPGHEPVGP (68 aa)) lie on the Cytoplasmic side of the membrane.

This sequence belongs to the LRFN family. In terms of assembly, can form heteromeric complexes with LRFN1, LRFN2, LRFN4 and LRFN5. Able to form homomeric complexes across cell junctions, between adjacent cells. Does not interact with DLG4. Post-translationally, N-glycosylated.

The protein localises to the cell membrane. It is found in the cell projection. It localises to the axon. The protein resides in the dendrite. Its subcellular location is the synapse. The protein localises to the presynaptic cell membrane. It is found in the postsynaptic cell membrane. In terms of biological role, cell adhesion molecule that mediates homophilic cell-cell adhesion in a Ca(2+)-independent manner. Promotes neurite outgrowth in hippocampal neurons. The sequence is that of Leucine-rich repeat and fibronectin type-III domain-containing protein 3 (LRFN3) from Homo sapiens (Human).